The following is a 146-amino-acid chain: 3-dehydroquinate dehydratase (146 aa).

Tyrosine 22 functions as the Proton acceptor in the catalytic mechanism. Asparagine 73, histidine 79, and aspartate 86 together coordinate substrate. Catalysis depends on histidine 99, which acts as the Proton donor. Substrate-binding positions include 100–101 (LS) and arginine 110.

Belongs to the type-II 3-dehydroquinase family. Homododecamer.

The enzyme catalyses 3-dehydroquinate = 3-dehydroshikimate + H2O. The protein operates within metabolic intermediate biosynthesis; chorismate biosynthesis; chorismate from D-erythrose 4-phosphate and phosphoenolpyruvate: step 3/7. Catalyzes a trans-dehydration via an enolate intermediate. This Synechococcus sp. (strain CC9605) protein is 3-dehydroquinate dehydratase.